A 907-amino-acid chain; its full sequence is Protein translocase subunit SecA (907 aa).

ATP is bound by residues Gln-87, 105-109 (GEGKT), and Asp-512. The interval 834 to 907 (QEDVERMEEQ…KKYKQCHGKI (74 aa)) is disordered. 2 stretches are compositionally biased toward basic and acidic residues: residues 836 to 853 (DVER…EAAR) and 873 to 888 (EEAH…KVGR). The Zn(2+) site is built by Cys-892, Cys-894, Cys-903, and His-904. Residues 898–907 (KKYKQCHGKI) are compositionally biased toward basic residues.

Belongs to the SecA family. In terms of assembly, monomer and homodimer. Part of the essential Sec protein translocation apparatus which comprises SecA, SecYEG and auxiliary proteins SecDF-YajC and YidC. Zn(2+) is required as a cofactor.

It is found in the cell inner membrane. The protein resides in the cytoplasm. It catalyses the reaction ATP + H2O + cellular proteinSide 1 = ADP + phosphate + cellular proteinSide 2.. Functionally, part of the Sec protein translocase complex. Interacts with the SecYEG preprotein conducting channel. Has a central role in coupling the hydrolysis of ATP to the transfer of proteins into and across the cell membrane, serving both as a receptor for the preprotein-SecB complex and as an ATP-driven molecular motor driving the stepwise translocation of polypeptide chains across the membrane. This Aliivibrio fischeri (strain MJ11) (Vibrio fischeri) protein is Protein translocase subunit SecA.